A 352-amino-acid polypeptide reads, in one-letter code: Ion-translocating oxidoreductase complex subunit D (352 aa).

4 helical membrane-spanning segments follow: residues Ile20–Gly40, Gly42–Leu62, Val69–Pro91, and Pro123–Leu143. Thr187 bears the FMN phosphoryl threonine mark. A run of 5 helical transmembrane segments spans residues Leu215 to Leu235, Trp242 to Phe262, Leu267 to Leu287, Leu301 to Pro321, and Asp322 to Thr342.

It belongs to the NqrB/RnfD family. As to quaternary structure, the complex is composed of six subunits: RsxA, RsxB, RsxC, RsxD, RsxE and RsxG. Requires FMN as cofactor.

It localises to the cell inner membrane. In terms of biological role, part of a membrane-bound complex that couples electron transfer with translocation of ions across the membrane. Required to maintain the reduced state of SoxR. This Salmonella dublin (strain CT_02021853) protein is Ion-translocating oxidoreductase complex subunit D.